Reading from the N-terminus, the 270-residue chain is NAD kinase (270 aa).

The Proton acceptor role is filled by Asp-45. NAD(+) contacts are provided by residues 45–46 (DG), 121–122 (NE), Arg-147, Asp-149, 160–165 (TAYNKS), and Ala-184.

The protein belongs to the NAD kinase family. The cofactor is a divalent metal cation.

It localises to the cytoplasm. It carries out the reaction NAD(+) + ATP = ADP + NADP(+) + H(+). Its function is as follows. Involved in the regulation of the intracellular balance of NAD and NADP, and is a key enzyme in the biosynthesis of NADP. Catalyzes specifically the phosphorylation on 2'-hydroxyl of the adenosine moiety of NAD to yield NADP. This Limosilactobacillus reuteri subsp. reuteri (strain JCM 1112) (Lactobacillus reuteri) protein is NAD kinase.